The following is a 155-amino-acid chain: MSRRGTAEEKTAKSDPIYRNRLVNMLVNRILKHGKKSLAYQIIYRALKKIQQKTETNPLSVLRQAIRGVTPDIAVKSRRVGGSTHQVPIEIGSTQGKALAIRWLLAASRKRPGRNMAFKLSSELVDAAKGSGDAIRKKEETHKMAEANRAFAHFR.

It belongs to the universal ribosomal protein uS7 family. In terms of assembly, part of the 30S ribosomal subunit.

The protein localises to the plastid. Its subcellular location is the chloroplast. One of the primary rRNA binding proteins, it binds directly to 16S rRNA where it nucleates assembly of the head domain of the 30S subunit. The chain is Small ribosomal subunit protein uS7cz/uS7cy (rps7-A) from Acorus calamus var. americanus (American sweet flag).